The chain runs to 148 residues: Photosystem II extrinsic protein U, chloroplastic (148 aa).

The transit peptide at 1-32 (MKLAVFAVLISTVAAFVAPNGVQRAATTELNA) directs the protein to the chloroplast. The transit peptide at 33 to 54 (ERREFLSAAAVAAGLAFPLTAN) directs the protein to the thylakoid.

Belongs to the PsbU family. PSII is composed of 1 copy each of membrane proteins PsbA, PsbB, PsbC, PsbD, PsbE, PsbF, PsbH, PsbI, PsbJ, PsbK, PsbL, PsbM, PsbT, PsbX, PsbY, PsbZ, Psb30/Ycf12, at least 3 peripheral proteins of the oxygen-evolving complex and a large number of cofactors. It forms dimeric complexes. The oxygen-evolving complex may be composed of PsbO, PsbQ', PsbV and PsbU.

The protein localises to the plastid. It is found in the chloroplast thylakoid membrane. Its function is as follows. One of the extrinsic, lumenal subunits of photosystem II (PSII), which stabilize and protect the oxygen-evolving complex. PSII is a light-driven water plastoquinone oxidoreductase, using light energy to abstract electrons from H(2)O, generating a proton gradient subsequently used for ATP formation. Stabilizes the structure of photosystem II oxygen-evolving complex (OEC), the ion environment of oxygen evolution and protects the OEC against heat-induced inactivation. The polypeptide is Photosystem II extrinsic protein U, chloroplastic (Phaeodactylum tricornutum (Diatom)).